Reading from the N-terminus, the 100-residue chain is NAD(P)H-quinone oxidoreductase subunit 4L, chloroplastic (100 aa).

The next 3 helical transmembrane spans lie at 1–21, 30–50, and 60–80; these read MLEN…YGLT, LMCL…FSSF, and VFAI…LAII.

This sequence belongs to the complex I subunit 4L family. NDH is composed of at least 16 different subunits, 5 of which are encoded in the nucleus.

Its subcellular location is the plastid. The protein localises to the chloroplast thylakoid membrane. It carries out the reaction a plastoquinone + NADH + (n+1) H(+)(in) = a plastoquinol + NAD(+) + n H(+)(out). It catalyses the reaction a plastoquinone + NADPH + (n+1) H(+)(in) = a plastoquinol + NADP(+) + n H(+)(out). NDH shuttles electrons from NAD(P)H:plastoquinone, via FMN and iron-sulfur (Fe-S) centers, to quinones in the photosynthetic chain and possibly in a chloroplast respiratory chain. The immediate electron acceptor for the enzyme in this species is believed to be plastoquinone. Couples the redox reaction to proton translocation, and thus conserves the redox energy in a proton gradient. This is NAD(P)H-quinone oxidoreductase subunit 4L, chloroplastic from Staurastrum punctulatum (Green alga).